A 1850-amino-acid polypeptide reads, in one-letter code: Chitin synthase V (1850 aa).

Positions 1–27 (MASTLPPLGGGNGGPHTQHSLPSLPAH) are disordered. One can recognise a Myosin motor domain in the interval 1-779 (MASTLPPLGG…EIAGLVDGSA (779 aa)). ATP is bound at residue 105-112 (GESGSGKS). Asparagine 245, asparagine 290, asparagine 427, asparagine 481, and asparagine 558 each carry an N-linked (GlcNAc...) asparagine glycan. The disordered stretch occupies residues 289–309 (NNTSATGDDSGGFSHEGGQTS). A disordered region spans residues 593 to 647 (SKPMRAPSVMSRKGGRGRGIASQRRQQESNLFDSGNTHAESRSPKGGNKGGIDQG). A compositionally biased stretch (polar residues) spans 620–630 (ESNLFDSGNTH). The tract at residues 656-680 (LDNVQKAVTDPGTNAYFVFCLKPND) is actin-binding. 2 helical membrane-spanning segments follow: residues 884-904 (WVFT…RWIG) and 923-943 (MLIW…PMLI). The Cytochrome b5 heme-binding domain maps to 947–1006 (QNVFSAAELSSHNGKDGNSAYVSIRGHVIDLGSFADRHYPSFVSRKTMLNYAGMDVSSLF). Asparagine 1033, asparagine 1058, and asparagine 1186 each carry an N-linked (GlcNAc...) asparagine glycan. Residues 1196 to 1216 (LVLAVSILLVSVIAFKFFAAL) form a helical membrane-spanning segment. Residues asparagine 1453 and asparagine 1559 are each glycosylated (N-linked (GlcNAc...) asparagine). 4 helical membrane-spanning segments follow: residues 1568-1588 (LIPM…VVFI), 1590-1610 (LLST…IVLV), 1617-1637 (VPIT…IIFI), and 1644-1664 (MVGW…GLPL). Asparagine 1767 carries an N-linked (GlcNAc...) asparagine glycan. Residues 1800 to 1850 (LPSDDALLAEIRDILKTADLMTVTKKGIKQELERRFDVPLDAKRAYINSGK) enclose the DEK-C domain.

The protein in the N-terminal section; belongs to the TRAFAC class myosin-kinesin ATPase superfamily. Myosin family. In the C-terminal section; belongs to the chitin synthase family. Class V subfamily. In terms of tissue distribution, expressed in conidia and during appressorium formation.

Its subcellular location is the cell membrane. It localises to the cell septum. The protein localises to the cell tip. The enzyme catalyses [(1-&gt;4)-N-acetyl-beta-D-glucosaminyl](n) + UDP-N-acetyl-alpha-D-glucosamine = [(1-&gt;4)-N-acetyl-beta-D-glucosaminyl](n+1) + UDP + H(+). Functionally, polymerizes chitin, a structural polymer of the cell wall and septum, by transferring the sugar moiety of UDP-GlcNAc to the non-reducing end of the growing chitin polymer. Contributes to the production of conidia and the ability of fungal conidia to germinate. Involved in the fungal cell wall integrity and the ability of conidia to withstand biophysical pressure. Required for appressorium formation and evasion of insect cellular and/or humoral defenses, promoting the fungal dimorphic transition to the production of hyphal bodies that occurs within hosts, and ultimately to virulence. This is Chitin synthase V from Metarhizium acridum (strain CQMa 102).